Reading from the N-terminus, the 311-residue chain is MADTTTLLHTTVLLDEAVDALLGGAGPAPAGVWIDATFGRGGHSRRILERLGPDGRLVAFDKDPEAIHEAARITDARFSIRHEGFRHLADLPERSAAGILMDLGVSSPQIDSPERGFSFRFDGPLDMRMDTTRGESVADWLATADVGQIAEVIREYGEERFAGPIAKAIAARRAERGPLRTTSELAQLVAGAVKTREAGQNPATRTFQALRIFINAELEELQAALEASLRVLAPGGRLAVISFHSLEDRIVKQFIAQHSREVYDRRAPFAAPQPMRLKALDRIKPGACEVDANPRARSAVMRVAERTEVPA.

S-adenosyl-L-methionine contacts are provided by residues 41-43 (GGH), D61, F85, D102, and Q109.

Belongs to the methyltransferase superfamily. RsmH family.

Its subcellular location is the cytoplasm. It carries out the reaction cytidine(1402) in 16S rRNA + S-adenosyl-L-methionine = N(4)-methylcytidine(1402) in 16S rRNA + S-adenosyl-L-homocysteine + H(+). Specifically methylates the N4 position of cytidine in position 1402 (C1402) of 16S rRNA. This chain is Ribosomal RNA small subunit methyltransferase H, found in Paracidovorax citrulli (strain AAC00-1) (Acidovorax citrulli).